The sequence spans 364 residues: Capsular polysaccharide phosphotransferase cps1A (364 aa).

It belongs to the stealth family.

Its function is as follows. Part of a capsular polysaccharide synthesis locus. The polypeptide is Capsular polysaccharide phosphotransferase cps1A (cps1A) (Actinobacillus pleuropneumoniae (Haemophilus pleuropneumoniae)).